The chain runs to 43 residues: Protein PsbN (43 aa).

Residues Asn-5–Phe-27 traverse the membrane as a helical segment.

This sequence belongs to the PsbN family.

Its subcellular location is the plastid. It localises to the chloroplast thylakoid membrane. Its function is as follows. May play a role in photosystem I and II biogenesis. This Ephedra sinica (Chinese ephedra) protein is Protein PsbN.